The primary structure comprises 174 residues: Peptide deformylase (174 aa).

Cys-96 and His-138 together coordinate Fe cation. Glu-139 is an active-site residue. Position 142 (His-142) interacts with Fe cation.

This sequence belongs to the polypeptide deformylase family. Requires Fe(2+) as cofactor.

It carries out the reaction N-terminal N-formyl-L-methionyl-[peptide] + H2O = N-terminal L-methionyl-[peptide] + formate. In terms of biological role, removes the formyl group from the N-terminal Met of newly synthesized proteins. Requires at least a dipeptide for an efficient rate of reaction. N-terminal L-methionine is a prerequisite for activity but the enzyme has broad specificity at other positions. This chain is Peptide deformylase, found in Helicobacter pylori (strain J99 / ATCC 700824) (Campylobacter pylori J99).